Consider the following 72-residue polypeptide: MSALFNFRSLLQVILLLICSCSYVHGQWPSLLDRYKNHEVLGAFWKMARVGERASPYVSLACILMAISQFNS.

Residues 1–26 form the signal peptide; the sequence is MSALFNFRSLLQVILLLICSCSYVHG. At 27 to 53 the chain is on the lumenal side; sequence QWPSLLDRYKNHEVLGAFWKMARVGER. A helical transmembrane segment spans residues 54 to 72; that stretch reads ASPYVSLACILMAISQFNS.

The protein belongs to the KISH family.

Its subcellular location is the endoplasmic reticulum membrane. The protein localises to the golgi apparatus membrane. Its function is as follows. Involved in the early part of the secretory pathway. This is Protein Kish from Saccharomyces cerevisiae (strain ATCC 204508 / S288c) (Baker's yeast).